Here is a 293-residue protein sequence, read N- to C-terminus: Proline iminopeptidase (293 aa).

Positions 28–277 constitute an AB hydrolase-1 domain; that stretch reads KPLVLLHGGP…FSRHMPFVEE (250 aa). Ser104 serves as the catalytic Nucleophile. Residue Asp244 is part of the active site. His271 serves as the catalytic Proton donor.

The protein belongs to the peptidase S33 family.

The enzyme catalyses Release of N-terminal proline from a peptide.. Functionally, releases the N-terminal proline from various substrates. The chain is Proline iminopeptidase from Clostridium botulinum (strain Hall / ATCC 3502 / NCTC 13319 / Type A).